Reading from the N-terminus, the 249-residue chain is U1 small nuclear ribonucleoprotein usp102 (249 aa).

The disordered stretch occupies residues 1 to 25 (MDPQTNSHQEVQQPSPKETDSQTPS). One can recognise an RRM 1 domain in the interval 26–105 (ETLYIRNIEE…KPMMIQYSKS (80 aa)). The tract at residues 113–157 (RESPEEIETRKKDRKNRREMLKRTSALQPAAPKPTHKKPVPKRNV) is disordered. Over residues 114–134 (ESPEEIETRKKDRKNRREMLK) the composition is skewed to basic and acidic residues. The 74-residue stretch at 174-247 (KVLLLQNIPQ…NQIKVTFARK (74 aa)) folds into the RRM 2 domain.

It belongs to the RRM U1 A/B'' family. Component of the spliceosome where it is associated with snRNP U1.

It is found in the nucleus. The protein resides in the nucleolus. In terms of biological role, involved in nuclear mRNA splicing. This chain is U1 small nuclear ribonucleoprotein usp102, found in Schizosaccharomyces pombe (strain 972 / ATCC 24843) (Fission yeast).